Reading from the N-terminus, the 557-residue chain is 2-isopropylmalate synthase (557 aa).

Residues 33 to 307 (PLWLSTDLRD…DPGLDFSDID (275 aa)) form the Pyruvate carboxyltransferase domain. Mg(2+) is bound by residues D42, H246, H248, and N282. Positions 439 to 557 (AETPYALKGH…LGQQASIRAA (119 aa)) are regulatory domain.

It belongs to the alpha-IPM synthase/homocitrate synthase family. LeuA type 2 subfamily. In terms of assembly, homodimer. The cofactor is Mg(2+).

Its subcellular location is the cytoplasm. The enzyme catalyses 3-methyl-2-oxobutanoate + acetyl-CoA + H2O = (2S)-2-isopropylmalate + CoA + H(+). It participates in amino-acid biosynthesis; L-leucine biosynthesis; L-leucine from 3-methyl-2-oxobutanoate: step 1/4. Catalyzes the condensation of the acetyl group of acetyl-CoA with 3-methyl-2-oxobutanoate (2-ketoisovalerate) to form 3-carboxy-3-hydroxy-4-methylpentanoate (2-isopropylmalate). The sequence is that of 2-isopropylmalate synthase from Azotobacter vinelandii (strain DJ / ATCC BAA-1303).